We begin with the raw amino-acid sequence, 116 residues long: Small ribosomal subunit protein bS16 (116 aa).

It belongs to the bacterial ribosomal protein bS16 family.

This chain is Small ribosomal subunit protein bS16, found in Chlamydia muridarum (strain MoPn / Nigg).